The following is a 323-amino-acid chain: Calcium homeostasis modulator protein 2 (323 aa).

Residues 1–21 (MAALIAENFRFLSLFFKSKDV) are Cytoplasmic-facing. The central pore stretch occupies residues 14–39 (LFFKSKDVMIFNGLVALGTVGSQELF). Residues 22–43 (MIFNGLVALGTVGSQELFSVVA) traverse the membrane as a helical segment. At 44 to 52 (FHCPCSPAR) the chain is on the extracellular side. 2 cysteine pairs are disulfide-bonded: Cys-46/Cys-130 and Cys-48/Cys-162. The helical transmembrane segment at 53–76 (NYLYGLTAIGVPALALFLIGVILN) threads the bilayer. Over 77-101 (NHTWNLVAECQYRRAKNCSAAPTFL) the chain is Cytoplasmic. The chain crosses the membrane as a helical span at residues 102-132 (LLSSILGRAAVAPVTWSVISLLRGEAYVCAL). Topologically, residues 133-179 (SEFVDPSSLTAGDEGFPPDHATEILARFPCGEGPANLSGFREEVSRR) are extracellular. The hemichannel docking stretch occupies residues 145–152 (DEGFPPDH). A helical membrane pass occupies residues 180–206 (LKYESQLFGWLLIGVVAILVFLTKCFK). Topologically, residues 207–323 (HYCSPLSYRQ…DNVEMALLTV (117 aa)) are cytoplasmic. Residues 214-251 (YRQEAYWAQYRTNEDQLFQRTAEVHSRVLAANNVRRFF) are intersubunit interaction.

Belongs to the CALHM family. Homo-undecamer. Two undecameric hemichannels can assemble in a head-to-head manner to form a gap junction.

Its subcellular location is the cell membrane. The enzyme catalyses ATP(in) = ATP(out). Pore-forming subunit of Ca(2+) homeostasis modulator channels. Mediates ATP release from astrocytes and ATP-induced Ca(2+) influx in microglia thus regulating neuronal ATP and Ca(2+) homeostasis, synaptic transmission and neuroinflammatory response. May form intercellular gap junctions. The gating mechanism remains unknown. The protein is Calcium homeostasis modulator protein 2 (Calhm2) of Rattus norvegicus (Rat).